We begin with the raw amino-acid sequence, 704 residues long: Protein kinase C-like 1 (704 aa).

Phosphothreonine; by autocatalysis is present on residues T89 and T139. Phorbol-ester/DAG-type zinc fingers lie at residues 165 to 215 and 237 to 287; these read GHQF…IMQC and PHRF…SNLC. Phosphothreonine; by autocatalysis is present on T324. In terms of domain architecture, Protein kinase spans 375–634; it reads FNLLKVLGKG…DGPIRQHCFF (260 aa). ATP-binding positions include 381-389 and K404; that span reads LGKGSFGKV. The active-site Proton acceptor is the D499. One can recognise an AGC-kinase C-terminal domain in the interval 635–704; the sequence is RGVDWKRFEN…FSYTNPHFSK (70 aa).

The protein belongs to the protein kinase superfamily. AGC Ser/Thr protein kinase family. PKC subfamily.

It catalyses the reaction L-seryl-[protein] + ATP = O-phospho-L-seryl-[protein] + ADP + H(+). The enzyme catalyses L-threonyl-[protein] + ATP = O-phospho-L-threonyl-[protein] + ADP + H(+). Diacylglycerol (DAG)-dependent serine/threonine-protein kinase that phosphorylates a range of cellular proteins. Phosphorylates mlk-1, a component of the JNK pathway. Involved in axon regeneration after injury probably by activating the JNK pathway. Plays a role in resistance to fungal infection and in wound healing by promoting expression of antimicrobial peptide nlp-29 in the epidermis downstream of gpa-12 and plc-3 and upstream of tir-1-p38-like pathway. Probably by regulating neuronal transmission in ALA neurons, regulates the decrease in pharyngeal pumping during the quiescent state that precedes each larval molt, downstream of lin-3 and receptor let-23 and phospholipase plc-3. The polypeptide is Protein kinase C-like 1 (tpa-1) (Caenorhabditis elegans).